A 54-amino-acid polypeptide reads, in one-letter code: UPF0235 protein in proC 3'region (54 aa).

This sequence belongs to the UPF0235 family.

This is UPF0235 protein in proC 3'region from Vibrio alginolyticus.